A 1071-amino-acid chain; its full sequence is DNA-directed RNA polymerase subunit beta (1071 aa).

This sequence belongs to the RNA polymerase beta chain family. As to quaternary structure, in plastids the minimal PEP RNA polymerase catalytic core is composed of four subunits: alpha, beta, beta', and beta''. When a (nuclear-encoded) sigma factor is associated with the core the holoenzyme is formed, which can initiate transcription.

It localises to the plastid. The protein resides in the chloroplast. The catalysed reaction is RNA(n) + a ribonucleoside 5'-triphosphate = RNA(n+1) + diphosphate. Its function is as follows. DNA-dependent RNA polymerase catalyzes the transcription of DNA into RNA using the four ribonucleoside triphosphates as substrates. This chain is DNA-directed RNA polymerase subunit beta, found in Adiantum capillus-veneris (Maidenhair fern).